The sequence spans 205 residues: Ribonuclease HII (205 aa).

Residues 14-205 (SLISGIDEAG…SFRLKQLGEK (192 aa)) form the RNase H type-2 domain. A divalent metal cation contacts are provided by aspartate 20, glutamate 21, and aspartate 117.

Belongs to the RNase HII family. Mn(2+) is required as a cofactor. Mg(2+) serves as cofactor.

Its subcellular location is the cytoplasm. It carries out the reaction Endonucleolytic cleavage to 5'-phosphomonoester.. Functionally, endonuclease that specifically degrades the RNA of RNA-DNA hybrids. The polypeptide is Ribonuclease HII (Chlorobium phaeobacteroides (strain DSM 266 / SMG 266 / 2430)).